We begin with the raw amino-acid sequence, 282 residues long: Ubiquinone biosynthesis protein COQ4 homolog, mitochondrial (282 aa).

A mitochondrion-targeting transit peptide spans 1–30; that stretch reads MFVRKSCYSLINATRRCLRYRQLSSTTAGT. Zn(2+) contacts are provided by histidine 186, aspartate 187, histidine 190, and glutamate 202.

Belongs to the COQ4 family. In terms of assembly, component of a multi-subunit COQ enzyme complex. The cofactor is Zn(2+).

The protein localises to the mitochondrion inner membrane. The enzyme catalyses a 4-hydroxy-3-methoxy-5-(all-trans-polyprenyl)benzoate + H(+) = a 2-methoxy-6-(all-trans-polyprenyl)phenol + CO2. It participates in cofactor biosynthesis; ubiquinone biosynthesis. Its function is as follows. Lyase that catalyzes the C1-decarboxylation of 4-hydroxy-3-methoxy-5-(all-trans-polyprenyl)benzoic acid into 2-methoxy-6-(all-trans-polyprenyl)phenol during ubiquinone biosynthesis. In Anopheles gambiae (African malaria mosquito), this protein is Ubiquinone biosynthesis protein COQ4 homolog, mitochondrial.